Reading from the N-terminus, the 397-residue chain is Elongation factor Tu (397 aa).

Residues 10–207 form the tr-type G domain; that stretch reads KPHVNIGTIG…ACDSYIPEPQ (198 aa). The tract at residues 19–26 is G1; sequence GHIDHGKT. A GTP-binding site is contributed by 19 to 26; it reads GHIDHGKT. Position 26 (threonine 26) interacts with Mg(2+). The segment at 60-64 is G2; that stretch reads GITIA. The G3 stretch occupies residues 81 to 84; the sequence is DCPG. Residues 81-85 and 136-139 contribute to the GTP site; these read DCPGH and NKCD. Residues 136–139 are G4; the sequence is NKCD. A G5 region spans residues 174–176; it reads SAL.

The protein belongs to the TRAFAC class translation factor GTPase superfamily. Classic translation factor GTPase family. EF-Tu/EF-1A subfamily. Monomer.

It is found in the cytoplasm. The catalysed reaction is GTP + H2O = GDP + phosphate + H(+). GTP hydrolase that promotes the GTP-dependent binding of aminoacyl-tRNA to the A-site of ribosomes during protein biosynthesis. The polypeptide is Elongation factor Tu (Nitratidesulfovibrio vulgaris (strain ATCC 29579 / DSM 644 / CCUG 34227 / NCIMB 8303 / VKM B-1760 / Hildenborough) (Desulfovibrio vulgaris)).